The chain runs to 140 residues: Nucleoside diphosphate kinase (140 aa).

Residues Lys-11, Phe-59, Arg-87, Thr-93, Arg-104, and Asn-114 each coordinate ATP. The Pros-phosphohistidine intermediate role is filled by His-117.

It belongs to the NDK family. Homotetramer. Mg(2+) serves as cofactor.

It is found in the cytoplasm. It carries out the reaction a 2'-deoxyribonucleoside 5'-diphosphate + ATP = a 2'-deoxyribonucleoside 5'-triphosphate + ADP. The catalysed reaction is a ribonucleoside 5'-diphosphate + ATP = a ribonucleoside 5'-triphosphate + ADP. Major role in the synthesis of nucleoside triphosphates other than ATP. The ATP gamma phosphate is transferred to the NDP beta phosphate via a ping-pong mechanism, using a phosphorylated active-site intermediate. The sequence is that of Nucleoside diphosphate kinase from Rickettsia peacockii (strain Rustic).